We begin with the raw amino-acid sequence, 848 residues long: Heat shock protein 70 homolog lhs1 (848 aa).

The N-terminal stretch at Met1–Ala21 is a signal peptide. 11 N-linked (GlcNAc...) asparagine glycosylation sites follow: Asn134, Asn247, Asn359, Asn457, Asn462, Asn488, Asn555, Asn632, Asn678, Asn733, and Asn817. Residues Lys784–Leu848 form a disordered region. 2 stretches are compositionally biased toward polar residues: residues Thr807–Gln822 and Ala829–Gln840. Positions Ser845–Leu848 match the Prevents secretion from ER motif.

It belongs to the heat shock protein 70 family.

The protein resides in the endoplasmic reticulum lumen. The enzyme catalyses ATP + H2O = ADP + phosphate + H(+). In terms of biological role, chaperone required for protein translocation and folding in the endoplasmic reticulum. The protein is Heat shock protein 70 homolog lhs1 of Schizosaccharomyces pombe (strain 972 / ATCC 24843) (Fission yeast).